We begin with the raw amino-acid sequence, 436 residues long: 3-ketoacyl-CoA thiolase (436 aa).

Catalysis depends on Cys99, which acts as the Acyl-thioester intermediate. Active-site proton acceptor residues include His392 and Cys422.

The protein belongs to the thiolase-like superfamily. Thiolase family. Heterotetramer of two alpha chains (FadJ) and two beta chains (FadI).

Its subcellular location is the cytoplasm. It carries out the reaction an acyl-CoA + acetyl-CoA = a 3-oxoacyl-CoA + CoA. The protein operates within lipid metabolism; fatty acid beta-oxidation. Catalyzes the final step of fatty acid oxidation in which acetyl-CoA is released and the CoA ester of a fatty acid two carbons shorter is formed. The chain is 3-ketoacyl-CoA thiolase from Photorhabdus laumondii subsp. laumondii (strain DSM 15139 / CIP 105565 / TT01) (Photorhabdus luminescens subsp. laumondii).